Consider the following 351-residue polypeptide: Formyl peptide receptor 2 (351 aa).

The Extracellular segment spans residues 1–29 (MESNYSIHLNGSEVVVYDSTISRVLWILS). Asn-4 and Asn-10 each carry an N-linked (GlcNAc...) asparagine glycan. A helical membrane pass occupies residues 30–50 (MVVVSITFFLGVLGNGLVIWV). Topologically, residues 51–61 (AGFRMPHTVTT) are cytoplasmic. The helical transmembrane segment at 62–82 (IWYLNLALADFSFTATLPFLL) threads the bilayer. Residues 83–99 (VEMAMKEKWPFGWFLCK) are Extracellular-facing. Cys-98 and Cys-176 are oxidised to a cystine. The helical transmembrane segment at 100–120 (LVHIVVDVNLFGSVFLIALIA) threads the bilayer. Topologically, residues 121-144 (LDRCICVLHPVWAQNHRTVSLARK) are cytoplasmic. Residues 145 to 165 (VVVGPWIFALILTLPIFIFLT) traverse the membrane as a helical segment. Residues 166–205 (TVRIPGGDVYCTFNFGSWAQTDEEKLNTAITFVTTRGIIR) are Extracellular-facing. A helical transmembrane segment spans residues 206–226 (FLIGFSMPMSIVAVCYGLIAV). The Cytoplasmic portion of the chain corresponds to 227 to 241 (KINRRNLVNSSRPLR). Residues 242–262 (VLTAVVASFFICWFPFQLVAL) traverse the membrane as a helical segment. At 263–282 (LGTVWFKETLLSGSYKILDM) the chain is on the extracellular side. A helical membrane pass occupies residues 283 to 305 (FVNPTSSLAYFNSCLNPMLYVFM). The Cytoplasmic segment spans residues 306–351 (GQDFRERFIHSLPYSLERALSEDSGQTSDSSTSSTSPPADIELKAP). The disordered stretch occupies residues 325–351 (LSEDSGQTSDSSTSSTSPPADIELKAP). Residues 327-341 (EDSGQTSDSSTSSTS) are compositionally biased toward low complexity.

Belongs to the G-protein coupled receptor 1 family. In terms of assembly, interacts with Amyloid-beta protein 42, product of APP; the interaction takes place at the cell surface and the complex is then rapidly internalized. Primarily expressed in neutrophils. Not detected in vomeronasal neurons.

The protein localises to the cell membrane. Its function is as follows. High affinity receptor for N-formyl-methionyl peptides (FMLP), which are powerful neutrophil chemotactic factors. Stimulates chemotaxis in immune cells to site of infection or tissue damage upon recognition of several ligands, such as FMLP, or ligand involved in cell damage, disease or inflammation. Receptor for the chemokine-like protein FAM19A5, mediating FAM19A5-stimulated macrophage chemotaxis and the inhibitory effect on TNFSF11/RANKL-induced osteoclast differentiation. This chain is Formyl peptide receptor 2 (Fpr2), found in Mus musculus (Mouse).